The following is a 356-amino-acid chain: Holliday junction branch migration complex subunit RuvB (356 aa).

Positions 4 to 191 (TDKLATEQRI…FGIVARLEFY (188 aa)) are large ATPase domain (RuvB-L). Residues Leu-30, Arg-31, Gly-72, Lys-75, Thr-76, Thr-77, 138–140 (EDY), Arg-181, Tyr-191, and Arg-228 contribute to the ATP site. Mg(2+) is bound at residue Thr-76. Residues 192-262 (DAEQLSRIVR…VADAALAMLD (71 aa)) are small ATPAse domain (RuvB-S). Residues 265 to 356 (PVGFDLMDRK…RDEWDTPDGK (92 aa)) are head domain (RuvB-H). DNA is bound by residues Arg-301, Arg-320, and Arg-325.

Belongs to the RuvB family. Homohexamer. Forms an RuvA(8)-RuvB(12)-Holliday junction (HJ) complex. HJ DNA is sandwiched between 2 RuvA tetramers; dsDNA enters through RuvA and exits via RuvB. An RuvB hexamer assembles on each DNA strand where it exits the tetramer. Each RuvB hexamer is contacted by two RuvA subunits (via domain III) on 2 adjacent RuvB subunits; this complex drives branch migration. In the full resolvosome a probable DNA-RuvA(4)-RuvB(12)-RuvC(2) complex forms which resolves the HJ.

Its subcellular location is the cytoplasm. It catalyses the reaction ATP + H2O = ADP + phosphate + H(+). The RuvA-RuvB-RuvC complex processes Holliday junction (HJ) DNA during genetic recombination and DNA repair, while the RuvA-RuvB complex plays an important role in the rescue of blocked DNA replication forks via replication fork reversal (RFR). RuvA specifically binds to HJ cruciform DNA, conferring on it an open structure. The RuvB hexamer acts as an ATP-dependent pump, pulling dsDNA into and through the RuvAB complex. RuvB forms 2 homohexamers on either side of HJ DNA bound by 1 or 2 RuvA tetramers; 4 subunits per hexamer contact DNA at a time. Coordinated motions by a converter formed by DNA-disengaged RuvB subunits stimulates ATP hydrolysis and nucleotide exchange. Immobilization of the converter enables RuvB to convert the ATP-contained energy into a lever motion, pulling 2 nucleotides of DNA out of the RuvA tetramer per ATP hydrolyzed, thus driving DNA branch migration. The RuvB motors rotate together with the DNA substrate, which together with the progressing nucleotide cycle form the mechanistic basis for DNA recombination by continuous HJ branch migration. Branch migration allows RuvC to scan DNA until it finds its consensus sequence, where it cleaves and resolves cruciform DNA. The polypeptide is Holliday junction branch migration complex subunit RuvB (Burkholderia cenocepacia (strain HI2424)).